A 271-amino-acid polypeptide reads, in one-letter code: Calretinin (271 aa).

6 EF-hand domains span residues 16–51 (LTASQFLEIWKHFDADGNGYIEGKELENFFQELEKA), 63–98 (NFGEKMKEFMQKYDKNSDGKIEMAELAQILPTEENF), 107–142 (GSSAEFMEAWRKYDTDRSGYIEANELKGFLSDLLKK), 151–186 (KLQEYTQTILRMFDLNGDGKLGLSEMSRLLPVQENF), 195–230 (LTSEEFNAIFTFYDKDGSGYIDENELDALLKDLYEK), and 235–270 (MNIQQLTTYRKSVMSLAEAGKLYRKDLEIVLCSEPP). Positions 29, 31, 33, 35, 40, 76, 78, 80, 82, 87, 120, 122, 124, 126, 131, 164, 166, 168, 170, 175, 208, 210, 212, 214, and 219 each coordinate Ca(2+). Phosphotyrosine is present on tyrosine 214.

Belongs to the calbindin family. In terms of tissue distribution, widely expressed in central nervous system. Expressed in type I unipolar brush cells of the cerebellum (at protein level).

It localises to the synapse. Its subcellular location is the cell projection. The protein resides in the dendrite. Its function is as follows. Calcium-binding protein involved in calcium homeostasis and signal transduction. It plays a critical role in buffering intracellular calcium levels and modulating calcium-dependent signaling pathways. Predominantly expressed in specific neuronal populations, influences synaptic plasticity and neuronal excitability, contributing to learning and memory. During embryonic development, it facilitates neuronal differentiation and maturation. The sequence is that of Calretinin (Calb2) from Mus musculus (Mouse).